A 621-amino-acid chain; its full sequence is MTAREVGRIGLRKLLQRIGIVAESMTPLATDPVEVTQLLDARWYDERLRALADELGRDPDSVRAEAAGYLREMAASLDERAVQAWRGFSRWLMRAYDVLVDEDQITQLRKLDRKATLAFAFSHRSYLDGMLLPEAILANRLSPALTFGGANLNFFPMGAWAKRTGAIFIRRQTKDIPVYRFVLRAYAAQLVQNHVNLTWSIEGGRTRTGKLRPPVFGILRYITDAVDEIDGPEVYLVPTSIVYDQLHEVEAMTTEAYGAVKRPEDLRFLVRLARQQGERLGRAYLDFGEPLPLRKRLQEMRADKSGTGSEIERIALDVEHRINRATPVTPTAVVSLALLGADRSLSISEVLATVRPLASYIAARNWAVAGAADLTNRSTIRWTLHQMVASGVVSVYDAGTEAVWGIGEDQHLVAAFYRNTAIHILVDRAVAELALLAAAETTTNGSVSPATVRDEALSLRDLLKFEFLFSGRAQFEKDLANEVLLIGSVVDTSKPAAAADVWRLLESADVLLAHLVLRPFLDAYHIVADRLAAHEDDSFDEEGFLAECLQVGKQWELQRNIASAESRSMELFKTALRLARHRELVDGADATDIAKRRQQFADEIATATRRVNTIAELARRQ.

An HXXXXD motif motif is present at residues His123 to Asp128.

This sequence belongs to the GPAT/DAPAT family.

The protein resides in the cell membrane. This chain is Putative acyltransferase plsB1 (plsB1), found in Mycobacterium bovis (strain ATCC BAA-935 / AF2122/97).